A 317-amino-acid chain; its full sequence is Mitochondrial thiamine pyrophosphate carrier 1 (317 aa).

A run of 6 helical transmembrane segments spans residues 21 to 41 (AVSG…ARSV), 86 to 106 (VPAS…YAWL), 122 to 142 (LAVG…LDLL), 176 to 196 (GGAW…GIYE), 207 to 227 (LPWL…AAVF), and 281 to 300 (GLTM…LWVY). Solcar repeat units follow at residues 22 to 109 (VSGL…LNTA), 116 to 201 (PPQA…CTIA), and 206 to 306 (GLPW…CLRL).

Belongs to the mitochondrial carrier (TC 2.A.29) family.

It is found in the mitochondrion inner membrane. Its function is as follows. Mitochondrial transporter that mediates uptake of thiamine pyrophosphate (ThPP) into mitochondria. This Eremothecium gossypii (strain ATCC 10895 / CBS 109.51 / FGSC 9923 / NRRL Y-1056) (Yeast) protein is Mitochondrial thiamine pyrophosphate carrier 1 (TPC1).